The primary structure comprises 372 residues: Glutamate 5-kinase (372 aa).

Lys14 provides a ligand contact to ATP. Substrate is bound by residues Ser54, Asp141, and Asn153. ATP is bound at residue 173-174; the sequence is TD. The PUA domain occupies 280 to 358; the sequence is RGTLVLDAGA…EAIESILGYS (79 aa).

Belongs to the glutamate 5-kinase family.

It localises to the cytoplasm. The catalysed reaction is L-glutamate + ATP = L-glutamyl 5-phosphate + ADP. It functions in the pathway amino-acid biosynthesis; L-proline biosynthesis; L-glutamate 5-semialdehyde from L-glutamate: step 1/2. Functionally, catalyzes the transfer of a phosphate group to glutamate to form L-glutamate 5-phosphate. In Pseudomonas putida (strain ATCC 700007 / DSM 6899 / JCM 31910 / BCRC 17059 / LMG 24140 / F1), this protein is Glutamate 5-kinase.